We begin with the raw amino-acid sequence, 257 residues long: uncharacterized protein (257 aa).

Residues 7–27 traverse the membrane as a helical segment; sequence LFLCVSFLLITIFIGGGGFMN.

It belongs to the staphylococcal tandem lipoprotein family.

It is found in the cell membrane. This is an uncharacterized protein from Staphylococcus epidermidis (strain ATCC 12228 / FDA PCI 1200).